We begin with the raw amino-acid sequence, 353 residues long: Dihydroorotate dehydrogenase (quinone) (353 aa).

FMN is bound by residues Ala-66–Lys-70 and Thr-90. Lys-70 is a binding site for substrate. Asn-115–Phe-119 contacts substrate. The FMN site is built by Asn-143 and Asn-176. Asn-176 provides a ligand contact to substrate. The Nucleophile role is filled by Ser-179. Asn-181 is a substrate binding site. FMN-binding residues include Lys-212 and Thr-240. Asn-241–Thr-242 is a substrate binding site. FMN-binding positions include Gly-264, Gly-293, and Tyr-314–Thr-315.

It belongs to the dihydroorotate dehydrogenase family. Type 2 subfamily. As to quaternary structure, monomer. FMN is required as a cofactor.

Its subcellular location is the cell membrane. It catalyses the reaction (S)-dihydroorotate + a quinone = orotate + a quinol. The protein operates within pyrimidine metabolism; UMP biosynthesis via de novo pathway; orotate from (S)-dihydroorotate (quinone route): step 1/1. In terms of biological role, catalyzes the conversion of dihydroorotate to orotate with quinone as electron acceptor. The polypeptide is Dihydroorotate dehydrogenase (quinone) (Mycolicibacterium gilvum (strain PYR-GCK) (Mycobacterium gilvum (strain PYR-GCK))).